The chain runs to 305 residues: MPIKINKTVIFLMGPTTSGKTDLAIKLSQQFKTRLISVDSALIYKGMDIGTAKPDKATLKKYPHHLIDICNPEDSYSAFNFARNANAQIKTAFANNELPILVGGTSFYFHALEYGLSKLPESTPESKEKFNQLLKSKGTIKLHRDLKRIDLQAANRIHPNDAQRITRALEVFDLSGKTLSKLQGNKKPIINHPIKKIILMPERSELHQRIEERFLSMMEHGFLDEVKHLKQNPNLHENLPAIRCVGYRQAWQYLNGKIDKAEMIEKAIIATRKLCKRQNTWLKSEKYVFILKSPSPVKVVTFINS.

Position 14 to 21 (14 to 21 (GPTTSGKT)) interacts with ATP. 16-21 (TTSGKT) provides a ligand contact to substrate. Interaction with substrate tRNA stretches follow at residues 39–42 (DSAL), 163–167 (QRITR), and 243–248 (RCVGYR).

This sequence belongs to the IPP transferase family. As to quaternary structure, monomer. The cofactor is Mg(2+).

It carries out the reaction adenosine(37) in tRNA + dimethylallyl diphosphate = N(6)-dimethylallyladenosine(37) in tRNA + diphosphate. Functionally, catalyzes the transfer of a dimethylallyl group onto the adenine at position 37 in tRNAs that read codons beginning with uridine, leading to the formation of N6-(dimethylallyl)adenosine (i(6)A). The sequence is that of tRNA dimethylallyltransferase from Ruthia magnifica subsp. Calyptogena magnifica.